Consider the following 139-residue polypeptide: S-adenosylmethionine decarboxylase proenzyme (139 aa).

Serine 63 (schiff-base intermediate with substrate; via pyruvic acid) is an active-site residue. Serine 63 bears the Pyruvic acid (Ser); by autocatalysis mark. The Proton acceptor; for processing activity role is filled by histidine 68. Cysteine 83 (proton donor; for catalytic activity) is an active-site residue.

Belongs to the prokaryotic AdoMetDC family. Type 1 subfamily. Heterotetramer of two alpha and two beta chains arranged as a dimer of alpha/beta heterodimers. Pyruvate serves as cofactor. Post-translationally, is synthesized initially as an inactive proenzyme. Formation of the active enzyme involves a self-maturation process in which the active site pyruvoyl group is generated from an internal serine residue via an autocatalytic post-translational modification. Two non-identical subunits are generated from the proenzyme in this reaction, and the pyruvate is formed at the N-terminus of the alpha chain, which is derived from the carboxyl end of the proenzyme. The post-translation cleavage follows an unusual pathway, termed non-hydrolytic serinolysis, in which the side chain hydroxyl group of the serine supplies its oxygen atom to form the C-terminus of the beta chain, while the remainder of the serine residue undergoes an oxidative deamination to produce ammonia and the pyruvoyl group blocking the N-terminus of the alpha chain.

It catalyses the reaction S-adenosyl-L-methionine + H(+) = S-adenosyl 3-(methylsulfanyl)propylamine + CO2. The protein operates within amine and polyamine biosynthesis; S-adenosylmethioninamine biosynthesis; S-adenosylmethioninamine from S-adenosyl-L-methionine: step 1/1. Its function is as follows. Catalyzes the decarboxylation of S-adenosylmethionine to S-adenosylmethioninamine (dcAdoMet), the propylamine donor required for the synthesis of the polyamines spermine and spermidine from the diamine putrescine. The sequence is that of S-adenosylmethionine decarboxylase proenzyme from Pyrococcus furiosus (strain ATCC 43587 / DSM 3638 / JCM 8422 / Vc1).